The following is a 309-amino-acid chain: D-alanine--D-alanine ligase (309 aa).

The ATP-grasp domain maps to 106–305; sequence KMLWKAFGLP…FEQLVVKILE (200 aa). Residue 136–191 coordinates ATP; it reads VEKLGLPVMVKPSLEGSSVGLTKVKRVEDLKSAVDFALKYDDTVLIEEWLSGAEFT. Mg(2+)-binding residues include D259, E272, and N274.

It belongs to the D-alanine--D-alanine ligase family. Mg(2+) serves as cofactor. The cofactor is Mn(2+).

It localises to the cytoplasm. It carries out the reaction 2 D-alanine + ATP = D-alanyl-D-alanine + ADP + phosphate + H(+). It participates in cell wall biogenesis; peptidoglycan biosynthesis. In terms of biological role, cell wall formation. The protein is D-alanine--D-alanine ligase of Pasteurella multocida (strain Pm70).